We begin with the raw amino-acid sequence, 474 residues long: Glutamate--tRNA ligase (474 aa).

Positions 9 to 19 (PSPTGYLHVGG) match the 'HIGH' region motif. Residues 240–244 (KLSKR) carry the 'KMSKS' region motif. K243 contacts ATP.

Belongs to the class-I aminoacyl-tRNA synthetase family. Glutamate--tRNA ligase type 1 subfamily. In terms of assembly, monomer.

The protein resides in the cytoplasm. The catalysed reaction is tRNA(Glu) + L-glutamate + ATP = L-glutamyl-tRNA(Glu) + AMP + diphosphate. Its function is as follows. Catalyzes the attachment of glutamate to tRNA(Glu) in a two-step reaction: glutamate is first activated by ATP to form Glu-AMP and then transferred to the acceptor end of tRNA(Glu). This Vibrio cholerae serotype O1 (strain ATCC 39315 / El Tor Inaba N16961) protein is Glutamate--tRNA ligase.